Reading from the N-terminus, the 776-residue chain is Endonuclease MutS2 (776 aa).

330 to 337 (GPNTGGKT) serves as a coordination point for ATP. Positions 701–776 (LDLRGMRYEE…GSGATIAILK (76 aa)) constitute a Smr domain.

This sequence belongs to the DNA mismatch repair MutS family. MutS2 subfamily. In terms of assembly, homodimer. Binds to stalled ribosomes, contacting rRNA.

Endonuclease that is involved in the suppression of homologous recombination and thus may have a key role in the control of bacterial genetic diversity. Functionally, acts as a ribosome collision sensor, splitting the ribosome into its 2 subunits. Detects stalled/collided 70S ribosomes which it binds and splits by an ATP-hydrolysis driven conformational change. Acts upstream of the ribosome quality control system (RQC), a ribosome-associated complex that mediates the extraction of incompletely synthesized nascent chains from stalled ribosomes and their subsequent degradation. Probably generates substrates for RQC. The protein is Endonuclease MutS2 of Lactococcus lactis subsp. lactis (strain IL1403) (Streptococcus lactis).